The primary structure comprises 353 residues: Neutral protease 2 homolog AO090001000135 (353 aa).

Positions 1-19 (MRFISVSSLLLALAPALNA) are cleaved as a signal peptide. The propeptide occupies 20 to 176 (VPVEVAGSAQ…TQAVKILERR (157 aa)). 2 disulfides stabilise this stretch: C182/C254 and C261/C279. H304 contributes to the Zn(2+) binding site. E305 is an active-site residue. Positions 308 and 319 each coordinate Zn(2+).

Belongs to the peptidase M35 family. Zn(2+) serves as cofactor.

It localises to the secreted. The catalysed reaction is Preferential cleavage of bonds with hydrophobic residues in P1'. Also 3-Asn-|-Gln-4 and 8-Gly-|-Ser-9 bonds in insulin B chain.. Secreted metalloproteinase that allows assimilation of proteinaceous substrates. Shows high activities on basic nuclear substrates such as histone and protamine. In Aspergillus oryzae (strain ATCC 42149 / RIB 40) (Yellow koji mold), this protein is Neutral protease 2 homolog AO090001000135.